A 59-amino-acid polypeptide reads, in one-letter code: MAKLEITLKRSVIGRPEDQRVTVRTLGLKKTNQTVVHEDNAAIRGMINKVSHLVSVKEQ.

It belongs to the universal ribosomal protein uL30 family. As to quaternary structure, part of the 50S ribosomal subunit.

The protein is Large ribosomal subunit protein uL30 of Bacillus subtilis (strain 168).